Here is a 95-residue protein sequence, read N- to C-terminus: Small ribosomal subunit protein uS17 (95 aa).

It belongs to the universal ribosomal protein uS17 family. In terms of assembly, part of the 30S ribosomal subunit.

One of the primary rRNA binding proteins, it binds specifically to the 5'-end of 16S ribosomal RNA. The protein is Small ribosomal subunit protein uS17 of Psychrobacter sp. (strain PRwf-1).